Reading from the N-terminus, the 554-residue chain is uncharacterized protein (554 aa).

Positions Met1 to Glu25 are disordered. Ser13 is modified (phosphoserine). The next 6 membrane-spanning stretches (helical) occupy residues Phe82 to Ile102, Ala120 to Leu140, Trp149 to Pro169, Phe171 to Val191, Val210 to Ile230, and Phe253 to Val273. At Ser334 the chain carries Phosphoserine. 6 consecutive transmembrane segments (helical) span residues Leu364–Leu384, Ser412–Phe432, Lys437–Ala457, Ala462–Tyr482, Ala497–Met517, and Ala525–Pro545.

This sequence belongs to the major facilitator superfamily.

The protein localises to the endoplasmic reticulum. It localises to the membrane. This is an uncharacterized protein from Schizosaccharomyces pombe (strain 972 / ATCC 24843) (Fission yeast).